The chain runs to 386 residues: NADH-ubiquinone oxidoreductase 49 kDa subunit homolog (386 aa).

This sequence belongs to the complex I 49 kDa subunit family.

The protein resides in the mitochondrion. It catalyses the reaction a ubiquinone + NADH + 5 H(+)(in) = a ubiquinol + NAD(+) + 4 H(+)(out). Its function is as follows. Core subunit of the mitochondrial membrane respiratory chain NADH dehydrogenase (Complex I) that is believed to belong to the minimal assembly required for catalysis. Complex I functions in the transfer of electrons from NADH to the respiratory chain. The immediate electron acceptor for the enzyme is believed to be ubiquinone. Component of the iron-sulfur (IP) fragment of the enzyme. Component of the iron-sulfur (IP) fragment of the enzyme. The sequence is that of NADH-ubiquinone oxidoreductase 49 kDa subunit homolog (NAD7) from Trypanosoma brucei brucei.